The following is a 671-amino-acid chain: MSAEHVEEVVSEEPFLGTLDIALLVVLLVGATWYFMRSRKKEEAPIRSYSIQPTTVSTVSTTENSFIKKLKASGRSLVVFYGSQTGTAEEFAGRLAKEGLRYRMKGMVADPEECDMEELLQMKDIPNSLAVFCLATYGEGDPTDNAMEFYEWITNGEVDLTGLNYAVFGLGNKTYEHYNKVAIYVDKRLEELGATRVFELGLGDDDANIEDDFITWKDRFWPSVCDFFGIEGSGEEVLMRQFRLLEQPDVQPDRIYTGEIARLHSMQNQRPPFDAKNPFLASVIVNRELHKGGGRSCMHIELDIDGSKMRYDAGDHIAMYPINDKILVEKLGKLCDANLDTVFSLINTDTDSSKKHPFPCPTTYRTALTHYLEITAIPRTHILKELAEYCSDEKDKEFLRNMASITPEGKEKYQNWIQNSSRNIVHILEDIKSCRPPIDHICELLPRLQPRYYSISSSSKLYPTNVHITAVLVQYETPTGRVNKGVATSYMKEKNPSVGEVKVPVFIRKSQFRLPTKSEIPIIMVGPGTGLAPFRGFIQERQFLRDGGKVVGDTILYFGCRKKDEDFIYREELEQYVQNGTLTLKTAFSRDQQEKIYVTHLIEQDADLIWKVIGEQKGHFYICGDAKNMAVDVRNILVKILSTKGNMNESDAVQYIKKMEAQKRYSADVWS.

Over 1 to 14 (MSAEHVEEVVSEEP) the chain is Lumenal. Residues 15 to 35 (FLGTLDIALLVVLLVGATWYF) traverse the membrane as a helical segment. At 36-671 (MRSRKKEEAP…QKRYSADVWS (636 aa)) the chain is on the cytoplasmic side. Positions 77–221 (LVVFYGSQTG…DFITWKDRFW (145 aa)) constitute a Flavodoxin-like domain. FMN contacts are provided by residues 83-88 (SQTGTA), 135-138 (ATYG), 170-179 (LGNKTYEHYN), and Asp-205. Positions 276–515 (KNPFLASVIV…FIRKSQFRLP (240 aa)) constitute an FAD-binding FR-type domain. An NADP(+)-binding site is contributed by Arg-295. FAD contacts are provided by residues 451-454 (RYYS), 469-471 (TAV), Tyr-475, and 485-488 (GVAT). NADP(+) is bound by residues Thr-529, 589–590 (SR), 595–599 (KIYVT), and Asp-632. Residue Trp-670 coordinates FAD.

It belongs to the NADPH--cytochrome P450 reductase family. This sequence in the N-terminal section; belongs to the flavodoxin family. The protein in the C-terminal section; belongs to the flavoprotein pyridine nucleotide cytochrome reductase family. The cofactor is FAD. It depends on FMN as a cofactor.

It is found in the endoplasmic reticulum membrane. It catalyses the reaction 2 oxidized [cytochrome P450] + NADPH = 2 reduced [cytochrome P450] + NADP(+) + H(+). Its function is as follows. This enzyme is required for electron transfer from NADP to cytochrome P450 in microsomes. It can also provide electron transfer to heme oxygenase and cytochrome B5. In Musca domestica (House fly), this protein is NADPH--cytochrome P450 reductase.